The following is a 685-amino-acid chain: Glycine--tRNA ligase beta subunit (685 aa).

The protein belongs to the class-II aminoacyl-tRNA synthetase family. In terms of assembly, tetramer of two alpha and two beta subunits.

The protein localises to the cytoplasm. It catalyses the reaction tRNA(Gly) + glycine + ATP = glycyl-tRNA(Gly) + AMP + diphosphate. This is Glycine--tRNA ligase beta subunit from Azotobacter vinelandii (strain DJ / ATCC BAA-1303).